The primary structure comprises 288 residues: 11-beta-hydroxysteroid dehydrogenase 1 (288 aa).

Topologically, residues 1-4 (MKKY) are cytoplasmic. The chain crosses the membrane as a helical; Signal-anchor for type II membrane protein span at residues 5–20 (LLPVLVLCLGYYYSTN). Residues 21 to 288 (EEFRPEMLQG…SYNRDLFVSN (268 aa)) lie on the Lumenal side of the membrane. NADP(+)-binding positions include 37–63 (GASK…TARS), 88–89 (TM), and 115–117 (NHI). N-linked (GlcNAc...) asparagine glycosylation is present at Asn-158. Ser-166 lines the substrate pocket. Tyr-179 acts as the Proton acceptor in catalysis. Residue 179–183 (YSASK) coordinates NADP(+). Asn-203 carries an N-linked (GlcNAc...) asparagine glycan. NADP(+) is bound by residues 212–218 (GFIDTET) and 214–218 (IDTET).

The protein belongs to the short-chain dehydrogenases/reductases (SDR) family. As to quaternary structure, homodimer. In terms of processing, glycosylated. As to expression, liver, kidney, lung and testis. Brain. Expressed in liver (at protein level).

The protein localises to the endoplasmic reticulum membrane. It carries out the reaction an 11beta-hydroxysteroid + NADP(+) = an 11-oxosteroid + NADPH + H(+). It catalyses the reaction corticosterone + NADP(+) = 11-dehydrocorticosterone + NADPH + H(+). The enzyme catalyses a 7beta-hydroxysteroid + NADP(+) = a 7-oxosteroid + NADPH + H(+). The catalysed reaction is 7-oxocholesterol + NADPH + H(+) = 7beta-hydroxycholesterol + NADP(+). It carries out the reaction chenodeoxycholate + NADP(+) = 7-oxolithocholate + NADPH + H(+). It catalyses the reaction 7-oxolithocholate + NADPH + H(+) = ursodeoxycholate + NADP(+). The enzyme catalyses glycochenodeoxycholate + NADP(+) = 7-oxoglycolithocholate + NADPH + H(+). The catalysed reaction is taurochenodeoxycholate + NADP(+) = 7-oxotaurolithocholate + NADPH + H(+). It carries out the reaction tauroursodeoxycholate + NADP(+) = 7-oxotaurolithocholate + NADPH + H(+). It catalyses the reaction glycoursodeoxycholate + NADP(+) = 7-oxoglycolithocholate + NADPH + H(+). The enzyme catalyses 7-oxopregnenolone + NADPH + H(+) = 7beta-hydroxypregnenolone + NADP(+). The catalysed reaction is 3beta,7alpha-dihydroxyandrost-5-en-17-one + NADP(+) = 3beta-hydroxy-5-androstene-7,17-dione + NADPH + H(+). It carries out the reaction 3beta-hydroxy-5-androstene-7,17-dione + NADPH + H(+) = 3beta,7beta-dihydroxyandrost-5-en-17-one + NADP(+). It catalyses the reaction 3beta-hydroxy-5alpha-androstane-7,17-dione + NADPH + H(+) = 3beta,7beta-dihydroxy-5alpha-androstan-17-one + NADP(+). Functionally, controls the reversible conversion of biologically active glucocorticoids such as 11-dehydrocorticosterone to corticosterone using NADP(H). Participates in the corticosteroid receptor-mediated anti-inflammatory response, as well as metabolic and homeostatic processes. Bidirectional in vitro, predominantly functions as a reductase in vivo, thereby increasing the concentration of active glucocorticoids. It has broad substrate specificity, besides glucocorticoids, it accepts other steroid and sterol substrates. Interconverts 7-oxo- and 7-hydroxy-neurosteroids such as 7-oxopregnenolone and 7beta-hydroxypregnenolone, 7-oxodehydroepiandrosterone (3beta-hydroxy-5-androstene-7,17-dione) and 7beta-hydroxydehydroepiandrosterone (3beta,7beta-dihydroxyandrost-5-en-17-one), among others. Catalyzes the stereo-specific conversion of the major dietary oxysterol, 7-ketocholesterol (7-oxocholesterol), into the more polar 7-beta-hydroxycholesterol metabolite. 7-oxocholesterol is one of the most important oxysterols, it participates in several events such as induction of apoptosis, accumulation in atherosclerotic lesions, lipid peroxidation, and induction of foam cell formation. Mediates the 7-oxo reduction of 7-oxolithocholate mainly to chenodeoxycholate, and to a lesser extent to ursodeoxycholate, both in its free form and when conjugated to glycine or taurine, providing a link between glucocorticoid activation and bile acid metabolism. Catalyzes the synthesis of 7-beta-25-dihydroxycholesterol from 7-oxo-25-hydroxycholesterol in vitro, which acts as a ligand for the G-protein-coupled receptor (GPCR) Epstein-Barr virus-induced gene 2 (EBI2) and may thereby regulate immune cell migration. The chain is 11-beta-hydroxysteroid dehydrogenase 1 from Rattus norvegicus (Rat).